We begin with the raw amino-acid sequence, 296 residues long: Bidirectional sugar transporter SWEET13 (296 aa).

Topologically, residues 1–9 are extracellular; the sequence is MAGLSLQHP. The chain crosses the membrane as a helical span at residues 10-30; that stretch reads WAFAFGLLGNLISFTTYLAPI. Residues 13 to 98 enclose the MtN3/slv 1 domain; that stretch reads AFGLLGNLIS…VMYLAYAPKK (86 aa). The Cytoplasmic segment spans residues 31 to 45; it reads PTFYRIYKSKSTEGF. A helical transmembrane segment spans residues 46–66; sequence QSVPYVVALFSAMLWIFYALI. Topologically, residues 67–71 are extracellular; it reads KSNEA. Residues 72 to 92 traverse the membrane as a helical segment; the sequence is LLITINAAGCVIETIYIVMYL. Residues 93-105 lie on the Cytoplasmic side of the membrane; it reads AYAPKKAKVFTTK. A helical membrane pass occupies residues 106-126; the sequence is ILLLLNVGVFGVILLLTLLLS. The Extracellular segment spans residues 127 to 133; sequence HGEQRVV. Residues 134–154 form a helical membrane-spanning segment; it reads SLGWVCVAFSVSVFVAPLSII. A MtN3/slv 2 domain is found at 134-217; sequence SLGWVCVAFS…MGLYVFYMNA (84 aa). At 155–167 the chain is on the cytoplasmic side; sequence KRVIQSRSVEYMP. Residues 168–188 form a helical membrane-spanning segment; it reads FSLSLTLTLSAVVWFLYGLLI. Residues 189–192 are Extracellular-facing; that stretch reads KDKY. Residues 193–213 traverse the membrane as a helical segment; sequence VALPNILGFTFGVVQMGLYVF. Residues 214–296 lie on the Cytoplasmic side of the membrane; that stretch reads YMNATPVAGE…PPRAVEVAAV (83 aa).

The protein belongs to the SWEET sugar transporter family. Forms homooligomers and/or heterooligomers.

The protein resides in the cell membrane. In terms of biological role, mediates both low-affinity uptake and efflux of sugar across the plasma membrane. Its function is as follows. Confers blight susceptibility. Confers TAL effector-mediated susceptibility to Xanthomonas oryzae pv. oryzae. This Oryza sativa subsp. japonica (Rice) protein is Bidirectional sugar transporter SWEET13 (SWEET13).